Reading from the N-terminus, the 199-residue chain is Peroxiredoxin-1 (199 aa).

One can recognise a Thioredoxin domain in the interval alanine 6–phenylalanine 165. The active-site Cysteine sulfenic acid (-SOH) intermediate is the cysteine 52.

Belongs to the peroxiredoxin family. AhpC/Prx1 subfamily. In terms of assembly, homodimer; disulfide-linked, upon oxidation. 5 homodimers assemble to form a ring-like decamer. Interacts with GDPD5; forms a mixed-disulfide with GDPD5. Interacts with SESN1 and SESN2. In terms of processing, the enzyme can be inactivated by further oxidation of the cysteine sulfenic acid (C(P)-SOH) to sulphinic acid (C(P)-SO2H) instead of its condensation to a disulfide bond. It can be reactivated by forming a transient disulfide bond with sulfiredoxin SRXN1, which reduces the cysteine sulfinic acid in an ATP- and Mg-dependent manner.

Its subcellular location is the cytoplasm. It catalyses the reaction a hydroperoxide + [thioredoxin]-dithiol = an alcohol + [thioredoxin]-disulfide + H2O. In terms of biological role, thiol-specific peroxidase that catalyzes the reduction of hydrogen peroxide and organic hydroperoxides to water and alcohols, respectively. Plays a role in cell protection against oxidative stress by detoxifying peroxides and as sensor of hydrogen peroxide-mediated signaling events. Might participate in the signaling cascades of growth factors and tumor necrosis factor-alpha by regulating the intracellular concentrations of H(2)O(2). Reduces an intramolecular disulfide bond in GDPD5 that gates the ability to GDPD5 to drive postmitotic motor neuron differentiation. This Gallus gallus (Chicken) protein is Peroxiredoxin-1 (PRDX1).